Consider the following 185-residue polypeptide: Elongation factor P (185 aa).

This sequence belongs to the elongation factor P family.

It is found in the cytoplasm. Its pathway is protein biosynthesis; polypeptide chain elongation. Functionally, involved in peptide bond synthesis. Stimulates efficient translation and peptide-bond synthesis on native or reconstituted 70S ribosomes in vitro. Probably functions indirectly by altering the affinity of the ribosome for aminoacyl-tRNA, thus increasing their reactivity as acceptors for peptidyl transferase. This chain is Elongation factor P, found in Bacillus cytotoxicus (strain DSM 22905 / CIP 110041 / 391-98 / NVH 391-98).